A 475-amino-acid chain; its full sequence is E3 ubiquitin-protein ligase TRIM21 (475 aa).

The segment at 16–55 (CPICLDPFVEPVSIECGHSFCQECISQVGKGGGSVCPVCR) adopts an RING-type zinc-finger fold. 4 residues coordinate Zn(2+): Cys-92, His-95, Cys-114, and His-120. The segment at 92–123 (CAVHGERLHLFCEKDGKALCWVCAQSRKHRDH) adopts a B box-type zinc-finger fold. Positions 128–238 (LEEAAQEYQE…ISELDRRCHS (111 aa)) form a coiled coil. Position 266 is a phosphoserine (Ser-266). The region spanning 268–465 (ELRSVCHVPG…NTAPLTLCPL (198 aa)) is the B30.2/SPRY domain.

The protein belongs to the TRIM/RBCC family. As to quaternary structure, homotrimer. Interacts (via C-terminus) with IRF8 (via C-terminus). Component of a SCF(SKP2)-like complex containing CUL1, SKP1, TRIM21 and SKP2. Interacts with CALR, CUL1, FBXW11, HSPA5, IKBKB, IRF3, SKP1 and VCP. Interacts with SKP2; the interaction with SKP2 does not depend on an intact F-box domain. Interacts (via N-terminus and C-terminus) with DCP2 (via N-terminus and C-terminus). Interacts with ULK1, BECN1 and with ATG8 family members, including GABARAP, GABARAPL1, GABARAPL2 and MAP1LC3C/LC3C. Interacts with TRIM21 and SQSTM1/sequestosome 1. Interacts with IRF3. Interacts (via the SPRY domain) with NMI (via coiled-coil domain); the interaction promotes 'Lys-63'-linked ubiquitination of NMI. Interacts with IFI35 and NMI; the interaction facilitates NMI-IFI35 complex formation. In terms of assembly, (Microbial infection) Interacts (via B30.2/SPRY domain) with severe fever with thrombocytopenia syndrome virus (SFTSV) NSs; this interaction activates NFE2L2-mediated transcriptional activation of antioxidant genes. Autoubiquitinated; does not lead to its proteasomal degradation. Deubiquitinated by USP4; leading to its stabilization. Isoform 1 and isoform 2 are expressed in fetal and adult heart and fetal lung.

It is found in the cytoplasm. It localises to the cytoplasmic vesicle. Its subcellular location is the autophagosome. The protein localises to the nucleus. The protein resides in the P-body. It is found in the stress granule. It carries out the reaction S-ubiquitinyl-[E2 ubiquitin-conjugating enzyme]-L-cysteine + [acceptor protein]-L-lysine = [E2 ubiquitin-conjugating enzyme]-L-cysteine + N(6)-ubiquitinyl-[acceptor protein]-L-lysine.. It participates in protein modification; protein ubiquitination. Functionally, E3 ubiquitin-protein ligase whose activity is dependent on E2 enzymes, UBE2D1, UBE2D2, UBE2E1 and UBE2E2. Forms a ubiquitin ligase complex in cooperation with the E2 UBE2D2 that is used not only for the ubiquitination of USP4 and IKBKB but also for its self-ubiquitination. Component of cullin-RING-based SCF (SKP1-CUL1-F-box protein) E3 ubiquitin-protein ligase complexes such as SCF(SKP2)-like complexes. A TRIM21-containing SCF(SKP2)-like complex is shown to mediate ubiquitination of CDKN1B ('Thr-187' phosphorylated-form), thereby promoting its degradation by the proteasome. Monoubiquitinates IKBKB that will negatively regulates Tax-induced NF-kappa-B signaling. Negatively regulates IFN-beta production post-pathogen recognition by catalyzing polyubiquitin-mediated degradation of IRF3. Mediates the ubiquitin-mediated proteasomal degradation of IgG1 heavy chain, which is linked to the VCP-mediated ER-associated degradation (ERAD) pathway. Promotes IRF8 ubiquitination, which enhanced the ability of IRF8 to stimulate cytokine genes transcription in macrophages. Plays a role in the regulation of the cell cycle progression. Enhances the decapping activity of DCP2. Exists as a ribonucleoprotein particle present in all mammalian cells studied and composed of a single polypeptide and one of four small RNA molecules. At least two isoforms are present in nucleated and red blood cells, and tissue specific differences in RO/SSA proteins have been identified. The common feature of these proteins is their ability to bind HY RNAs.2. Involved in the regulation of innate immunity and the inflammatory response in response to IFNG/IFN-gamma. Organizes autophagic machinery by serving as a platform for the assembly of ULK1, Beclin 1/BECN1 and ATG8 family members and recognizes specific autophagy targets, thus coordinating target recognition with assembly of the autophagic apparatus and initiation of autophagy. Also regulates autophagy through FIP200/RB1CC1 ubiquitination and subsequent decreased protein stability. Represses the innate antiviral response by facilitating the formation of the NMI-IFI35 complex through 'Lys-63'-linked ubiquitination of NMI. During viral infection, promotes cell pyroptosis by mediating 'Lys-6'-linked ubiquitination of ISG12a/IFI27, facilitating its translocation into the mitochondria and subsequent CASP3 activation. When up-regulated through the IFN/JAK/STAT signaling pathway, promotes 'Lys-27'-linked ubiquitination of MAVS, leading to the recruitment of TBK1 and up-regulation of innate immunity. Mediates 'Lys-63'-linked polyubiquitination of G3BP1 in response to heat shock, leading to stress granule disassembly. This chain is E3 ubiquitin-protein ligase TRIM21, found in Homo sapiens (Human).